We begin with the raw amino-acid sequence, 396 residues long: Argininosuccinate synthase (396 aa).

9-17 (AYSGGLDTS) provides a ligand contact to ATP. Residue Tyr85 participates in L-citrulline binding. Gly115 provides a ligand contact to ATP. L-aspartate contacts are provided by Thr117, Asn121, and Asp122. Residue Asn121 participates in L-citrulline binding. Residues Arg125, Ser173, Glu258, and Tyr270 each coordinate L-citrulline.

It belongs to the argininosuccinate synthase family. Type 1 subfamily. As to quaternary structure, homotetramer.

It localises to the cytoplasm. The enzyme catalyses L-citrulline + L-aspartate + ATP = 2-(N(omega)-L-arginino)succinate + AMP + diphosphate + H(+). It participates in amino-acid biosynthesis; L-arginine biosynthesis; L-arginine from L-ornithine and carbamoyl phosphate: step 2/3. The polypeptide is Argininosuccinate synthase (Streptococcus agalactiae serotype III (strain NEM316)).